Reading from the N-terminus, the 410-residue chain is Transcription factor SPN1 (410 aa).

The disordered stretch occupies residues 1-132; that stretch reads MSTADQEQPK…SRQELEEKLD (132 aa). T15 is subject to Phosphothreonine. Polar residues predominate over residues 20–52; that stretch reads TASSQKSTINAENENTKQNQSMEPQETSKGTSN. S23 bears the Phosphoserine; by ATM or ATR mark. S40 bears the Phosphoserine mark. The span at 53–65 shows a compositional bias: basic and acidic residues; sequence DTKDPDNGEKNEE. S85 is subject to Phosphoserine. Position 86 is a phosphothreonine (T86). S89 is subject to Phosphoserine. Positions 219–296 constitute a TFIIS N-terminal domain; the sequence is QSVRIWLEPL…AEWTRPIIGA (78 aa). The tract at residues 318-346 is disordered; it reads KSVMDSAKNRKKKSKSGEDPTSRGSSVQT.

Belongs to the IWS1 family. In terms of assembly, interacts with ABD1, RBP1, SPT5 and SPT6.

It localises to the nucleus. In terms of biological role, transcription factor involved in RNA polymerase II transcription regulation. May function in both SPT15/TBP post-recruitment and recruitment steps of transcription. The polypeptide is Transcription factor SPN1 (SPN1) (Saccharomyces cerevisiae (strain ATCC 204508 / S288c) (Baker's yeast)).